The sequence spans 141 residues: Ribosome-binding factor A (141 aa).

This sequence belongs to the RbfA family. In terms of assembly, monomer. Binds 30S ribosomal subunits, but not 50S ribosomal subunits or 70S ribosomes.

The protein resides in the cytoplasm. In terms of biological role, one of several proteins that assist in the late maturation steps of the functional core of the 30S ribosomal subunit. Associates with free 30S ribosomal subunits (but not with 30S subunits that are part of 70S ribosomes or polysomes). Required for efficient processing of 16S rRNA. May interact with the 5'-terminal helix region of 16S rRNA. The polypeptide is Ribosome-binding factor A (Afipia carboxidovorans (strain ATCC 49405 / DSM 1227 / KCTC 32145 / OM5) (Oligotropha carboxidovorans)).